The chain runs to 241 residues: Small ribosomal subunit protein eS4 (241 aa).

One can recognise an S4 RNA-binding domain in the interval 37 to 99 (IPLGLLLRDY…ADLYLRIVPD (63 aa)).

It belongs to the eukaryotic ribosomal protein eS4 family.

The chain is Small ribosomal subunit protein eS4 from Metallosphaera sedula (strain ATCC 51363 / DSM 5348 / JCM 9185 / NBRC 15509 / TH2).